The following is a 532-amino-acid chain: Variant surface glycoprotein ILTAT 1.23 (532 aa).

The N-terminal stretch at 1–23 (MFKNINAAVLLLILSTRNDYANA) is a signal peptide. N-linked (GlcNAc...) asparagine glycosylation is present at Asn66. Disordered regions lie at residues 79-107 (APKK…RNHA) and 408-504 (MQAG…DQDK). An N-linked (GlcNAc...) asparagine glycan is attached at Asn419. Positions 427–445 (CKWEEKDGKDGKCVADDSK) are enriched in basic and acidic residues. Over residues 450 to 470 (GNAPAGAGDGTAGTTTTPNCA) the composition is skewed to low complexity. 2 stretches are compositionally biased toward basic and acidic residues: residues 472 to 484 (HTDK…ENKG) and 494 to 504 (KGKEGESDQDK). The N-linked (GlcNAc...) asparagine glycan is linked to Asn509. A lipid anchor (GPI-anchor amidated asparagine) is attached at Asn509. Residues 510–532 (GSFLAKKKFALSVVSAAFTALLF) constitute a propeptide, removed in mature form.

It is found in the cell membrane. In terms of biological role, VSG forms a coat on the surface of the parasite. The trypanosome evades the immune response of the host by expressing a series of antigenically distinct VSGs from an estimated 1000 VSG genes. This is Variant surface glycoprotein ILTAT 1.23 from Trypanosoma brucei brucei.